Here is a 240-residue protein sequence, read N- to C-terminus: Fatty acid metabolism regulator protein (240 aa).

In terms of domain architecture, HTH gntR-type spans 6-74 (KGPASFAEKY…HGKPTRVNNF (69 aa)). A DNA-binding region (H-T-H motif) is located at residues 34–53 (ERELSELIGVTRTTLREVLQ).

As to quaternary structure, homodimer.

The protein resides in the cytoplasm. In terms of biological role, multifunctional regulator of fatty acid metabolism. This Shewanella oneidensis (strain ATCC 700550 / JCM 31522 / CIP 106686 / LMG 19005 / NCIMB 14063 / MR-1) protein is Fatty acid metabolism regulator protein.